A 163-amino-acid chain; its full sequence is Protein-export protein SecB (163 aa).

This sequence belongs to the SecB family. As to quaternary structure, homotetramer, a dimer of dimers. One homotetramer interacts with 1 SecA dimer.

The protein localises to the cytoplasm. Its function is as follows. One of the proteins required for the normal export of preproteins out of the cell cytoplasm. It is a molecular chaperone that binds to a subset of precursor proteins, maintaining them in a translocation-competent state. It also specifically binds to its receptor SecA. This Burkholderia ambifaria (strain MC40-6) protein is Protein-export protein SecB.